The following is a 238-amino-acid chain: Uridylate kinase (238 aa).

An ATP-binding site is contributed by 10–13; it reads KFSG. Positions 18–23 are involved in allosteric activation by GTP; it reads GDSGFG. Position 52 (Gly52) interacts with UMP. The ATP site is built by Gly53 and Arg57. Residues Asp73 and 134 to 141 contribute to the UMP site; that span reads TGNPFFTT. ATP is bound by residues Thr161, Tyr167, and Asp170.

The protein belongs to the UMP kinase family. In terms of assembly, homohexamer.

It localises to the cytoplasm. The enzyme catalyses UMP + ATP = UDP + ADP. It participates in pyrimidine metabolism; CTP biosynthesis via de novo pathway; UDP from UMP (UMPK route): step 1/1. Allosterically activated by GTP. Inhibited by UTP. Functionally, catalyzes the reversible phosphorylation of UMP to UDP. This is Uridylate kinase from Campylobacter curvus (strain 525.92).